We begin with the raw amino-acid sequence, 37 residues long: Large ribosomal subunit protein bL36 (37 aa).

It belongs to the bacterial ribosomal protein bL36 family.

The chain is Large ribosomal subunit protein bL36 from Syntrophotalea carbinolica (strain DSM 2380 / NBRC 103641 / GraBd1) (Pelobacter carbinolicus).